The following is a 402-amino-acid chain: Major outer membrane porin (402 aa).

The N-terminal stretch at 1-22 (MKKLLKSALLFAATGSALSLQA) is a signal peptide.

The protein belongs to the chlamydial porin (CP) (TC 1.B.2) family. Part of a disulfide cross-linked outer membrane complex (COMC) composed of the major outer membrane porin, the small cysteine-rich protein (OmcA) and the large cysteine-rich periplasmic protein (OmcB).

It localises to the cell outer membrane. Functionally, in elementary bodies (EBs, the infectious stage, which is able to survive outside the host cell) provides the structural integrity of the outer envelope through disulfide cross-links with the small cysteine-rich protein and the large cysteine-rich periplasmic protein. It has been described in publications as the Sarkosyl-insoluble COMC (Chlamydia outer membrane complex), and serves as the functional equivalent of peptidoglycan. Permits diffusion of specific solutes through the outer membrane. This is Major outer membrane porin (ompA) from Chlamydia psittaci (Chlamydophila psittaci).